The chain runs to 263 residues: MPHSKNQRKHRHHSHSERRRQPKRLTLTAKQQQMFDELLRTLNLTFANKKLLVQAFTHSSYVNEHRIQSCKDNERLEFLGDAVLELAVSQYLYKAFEQMSEGDMTKLRASIVCEPSLAQLAEELHFGELVLLGKGEEMTGGRKRPALLADVFESFVGALYLDQGMDAVYLFLERTIYPKISEGAFSHMMDFKSQLQEFIQRDNLGHIHYEIVQERGPAHNREFVSEVVLNNETLGVGTGRSKKEAEQHAAQQALITLSQKKEQ.

Residues 1-23 (MPHSKNQRKHRHHSHSERRRQPK) form a disordered region. Residues 35-164 (FDELLRTLNL…FVGALYLDQG (130 aa)) form the RNase III domain. Residue glutamate 77 coordinates Mg(2+). The active site involves aspartate 81. Mg(2+) is bound by residues aspartate 150 and glutamate 153. Glutamate 153 is an active-site residue. In terms of domain architecture, DRBM spans 190-259 (DFKSQLQEFI…AQQALITLSQ (70 aa)).

It belongs to the ribonuclease III family. In terms of assembly, homodimer. Requires Mg(2+) as cofactor.

The protein resides in the cytoplasm. The catalysed reaction is Endonucleolytic cleavage to 5'-phosphomonoester.. Digests double-stranded RNA. Involved in the processing of primary rRNA transcript to yield the immediate precursors to the large and small rRNAs (23S and 16S). Processes some mRNAs, and tRNAs when they are encoded in the rRNA operon. Processes pre-crRNA and tracrRNA of type II CRISPR loci if present in the organism. This Halalkalibacterium halodurans (strain ATCC BAA-125 / DSM 18197 / FERM 7344 / JCM 9153 / C-125) (Bacillus halodurans) protein is Ribonuclease 3.